A 515-amino-acid polypeptide reads, in one-letter code: 2-isopropylmalate synthase (515 aa).

The region spanning 5-268 (LIIFDTTLRD…DLGIDTTQIV (264 aa)) is the Pyruvate carboxyltransferase domain. Mn(2+) is bound by residues D14, H202, H204, and N239. Positions 396–515 (KFVSLAQRSE…NADKLNPQRA (120 aa)) are regulatory domain.

The protein belongs to the alpha-IPM synthase/homocitrate synthase family. LeuA type 1 subfamily. Homodimer. Requires Mn(2+) as cofactor.

It localises to the cytoplasm. It catalyses the reaction 3-methyl-2-oxobutanoate + acetyl-CoA + H2O = (2S)-2-isopropylmalate + CoA + H(+). It functions in the pathway amino-acid biosynthesis; L-leucine biosynthesis; L-leucine from 3-methyl-2-oxobutanoate: step 1/4. Catalyzes the condensation of the acetyl group of acetyl-CoA with 3-methyl-2-oxobutanoate (2-ketoisovalerate) to form 3-carboxy-3-hydroxy-4-methylpentanoate (2-isopropylmalate). The sequence is that of 2-isopropylmalate synthase from Burkholderia pseudomallei (strain 1106a).